A 658-amino-acid chain; its full sequence is Glycogen debranching enzyme (658 aa).

The Nucleophile role is filled by Asp-335. The Proton donor role is filled by Glu-370.

This sequence belongs to the glycosyl hydrolase 13 family.

The catalysed reaction is Hydrolysis of (1-&gt;6)-alpha-D-glucosidic linkages to branches with degrees of polymerization of three or four glucose residues in limit dextrin.. The protein operates within glycan degradation; glycogen degradation. Functionally, removes maltotriose and maltotetraose chains that are attached by 1,6-alpha-linkage to the limit dextrin main chain, generating a debranched limit dextrin. The protein is Glycogen debranching enzyme of Erwinia tasmaniensis (strain DSM 17950 / CFBP 7177 / CIP 109463 / NCPPB 4357 / Et1/99).